The chain runs to 183 residues: MRILGIDPGLRVTGFGVIDVSGHRLAYVASGVIRTPTADLATRLGTIFQGVSTLVREHAPDQAAIEQVFVNVNPQSTLLLGQARGAAICGLVSGGLPVAEYTALQLKQAVVGYGRATKSQMQEMVTRLLNLTGQPGSDAADALGMAICHAHSGSTLGAIGAIGGLAPALAKKGLRVRRGRLVR.

Catalysis depends on residues Asp7, Glu66, and Asp138. 3 residues coordinate Mg(2+): Asp7, Glu66, and Asp138.

The protein belongs to the RuvC family. Homodimer which binds Holliday junction (HJ) DNA. The HJ becomes 2-fold symmetrical on binding to RuvC with unstacked arms; it has a different conformation from HJ DNA in complex with RuvA. In the full resolvosome a probable DNA-RuvA(4)-RuvB(12)-RuvC(2) complex forms which resolves the HJ. The cofactor is Mg(2+).

Its subcellular location is the cytoplasm. It catalyses the reaction Endonucleolytic cleavage at a junction such as a reciprocal single-stranded crossover between two homologous DNA duplexes (Holliday junction).. Its function is as follows. The RuvA-RuvB-RuvC complex processes Holliday junction (HJ) DNA during genetic recombination and DNA repair. Endonuclease that resolves HJ intermediates. Cleaves cruciform DNA by making single-stranded nicks across the HJ at symmetrical positions within the homologous arms, yielding a 5'-phosphate and a 3'-hydroxyl group; requires a central core of homology in the junction. The consensus cleavage sequence is 5'-(A/T)TT(C/G)-3'. Cleavage occurs on the 3'-side of the TT dinucleotide at the point of strand exchange. HJ branch migration catalyzed by RuvA-RuvB allows RuvC to scan DNA until it finds its consensus sequence, where it cleaves and resolves the cruciform DNA. In Burkholderia ambifaria (strain MC40-6), this protein is Crossover junction endodeoxyribonuclease RuvC.